An 871-amino-acid chain; its full sequence is DNA mismatch repair protein MutS (871 aa).

618 to 625 (GPNMSGKS) contributes to the ATP binding site.

The protein belongs to the DNA mismatch repair MutS family.

In terms of biological role, this protein is involved in the repair of mismatches in DNA. It is possible that it carries out the mismatch recognition step. This protein has a weak ATPase activity. This is DNA mismatch repair protein MutS from Christiangramia forsetii (strain DSM 17595 / CGMCC 1.15422 / KT0803) (Gramella forsetii).